An 88-amino-acid chain; its full sequence is Beta-defensin 115 (88 aa).

An N-terminal signal peptide occupies residues 1–27 (MLPDHFSPLSGDIKLSVLALVVLVVLA). 3 cysteine pairs are disulfide-bonded: C38–C65, C45–C59, and C49–C66.

The protein belongs to the beta-defensin family.

It is found in the secreted. Has antibacterial activity. The sequence is that of Beta-defensin 115 (DEFB115) from Homo sapiens (Human).